Reading from the N-terminus, the 390-residue chain is S-adenosylmethionine synthase 4 (390 aa).

Residue Glu-9 participates in Mg(2+) binding. His-15 provides a ligand contact to ATP. Glu-43 is a K(+) binding site. L-methionine contacts are provided by Glu-56 and Gln-99. Residues 167–169, 235–238, Asp-246, 252–253, Ala-269, Lys-273, and Lys-277 each bind ATP; these read DGK, SGRF, and RK. L-methionine is bound at residue Asp-246. Lys-277 contributes to the L-methionine binding site.

It belongs to the AdoMet synthase family. Homotetramer. Mn(2+) is required as a cofactor. The cofactor is Mg(2+). Requires Co(2+) as cofactor. K(+) serves as cofactor.

It localises to the cytoplasm. It catalyses the reaction L-methionine + ATP + H2O = S-adenosyl-L-methionine + phosphate + diphosphate. It participates in amino-acid biosynthesis; S-adenosyl-L-methionine biosynthesis; S-adenosyl-L-methionine from L-methionine: step 1/1. Functionally, catalyzes the formation of S-adenosylmethionine from methionine and ATP. The reaction comprises two steps that are both catalyzed by the same enzyme: formation of S-adenosylmethionine (AdoMet) and triphosphate, and subsequent hydrolysis of the triphosphate. The protein is S-adenosylmethionine synthase 4 (METK4) of Populus trichocarpa (Western balsam poplar).